We begin with the raw amino-acid sequence, 151 residues long: Ribosome maturation factor RimP (151 aa).

Belongs to the RimP family.

The protein localises to the cytoplasm. In terms of biological role, required for maturation of 30S ribosomal subunits. The chain is Ribosome maturation factor RimP from Haemophilus influenzae (strain PittGG).